A 194-amino-acid polypeptide reads, in one-letter code: dTTP/UTP pyrophosphatase (194 aa).

Asp-73 (proton acceptor) is an active-site residue.

Belongs to the Maf family. YhdE subfamily. It depends on a divalent metal cation as a cofactor.

Its subcellular location is the cytoplasm. It catalyses the reaction dTTP + H2O = dTMP + diphosphate + H(+). The catalysed reaction is UTP + H2O = UMP + diphosphate + H(+). Its function is as follows. Nucleoside triphosphate pyrophosphatase that hydrolyzes dTTP and UTP. May have a dual role in cell division arrest and in preventing the incorporation of modified nucleotides into cellular nucleic acids. This Clostridium botulinum (strain Okra / Type B1) protein is dTTP/UTP pyrophosphatase.